The sequence spans 347 residues: 4-hydroxy-2-oxovalerate aldolase (347 aa).

One can recognise a Pyruvate carboxyltransferase domain in the interval 2–252 (ILISDATLRD…DTRTTFEHVM (251 aa)). 10–11 (RD) is a substrate binding site. Asp-11 contacts Mn(2+). Catalysis depends on His-14, which acts as the Proton acceptor. 2 residues coordinate substrate: Ser-164 and His-191. The Mn(2+) site is built by His-191 and His-193.

Belongs to the 4-hydroxy-2-oxovalerate aldolase family.

The enzyme catalyses (S)-4-hydroxy-2-oxopentanoate = acetaldehyde + pyruvate. This chain is 4-hydroxy-2-oxovalerate aldolase (mhpE), found in Burkholderia thailandensis (strain ATCC 700388 / DSM 13276 / CCUG 48851 / CIP 106301 / E264).